Consider the following 373-residue polypeptide: Transcription factor bHLH87 (373 aa).

Residues 127–227 (SAESENREIT…GGSSNISFQH (101 aa)) form a disordered region. Positions 188–218 (PQDDSEKGGFKLIYDENQSKSKKPRTEKERG) are enriched in basic and acidic residues. Positions 275–324 (ISTDPQTVAARQRRERISEKIRVLQTLVPGGTKMDTASMLDEAANYLKFL) constitute a bHLH domain.

In terms of assembly, homodimer. In terms of tissue distribution, flowers.

It is found in the nucleus. This is Transcription factor bHLH87 (BHLH87) from Arabidopsis thaliana (Mouse-ear cress).